Here is a 154-residue protein sequence, read N- to C-terminus: Pro-corazonin (154 aa).

The first 19 residues, 1–19 (MLRLLLLPLFLFTLSMCMG), serve as a signal peptide directing secretion. At Gln20 the chain carries Pyrrolidone carboxylic acid. Residue Asn30 is modified to Asparagine amide. The propeptide occupies 70–154 (LERCLSQLQR…SAEPNVFGKH (85 aa)).

The protein belongs to the corazonin family. Expression is restricted to 24 neurons in the larval CNS (8 in the brain and 16 in the ventral nerve cord) and 12-16 neurons in the pars lateralis of the adult brain.

Its subcellular location is the secreted. Cardioactive peptide. Corazonin is probably involved in the physiological regulation of the heart beat. Clock (Clk) and cycle (cyc) proteins negatively regulate Crz transcription in a cell-specific manner. This is Pro-corazonin (Crz) from Drosophila erecta (Fruit fly).